A 522-amino-acid chain; its full sequence is MTAQNTFDVIVIGGGISGLSAAKLLKEKGLSPVVLEARDRVGGRTFTVQNEQTKYVDLGGAYVGPTQNRILRLAKECGVKTIKVNEEERLVHYVKGKSYPFKGSFPPMWNPFALMDYNNLWRKMDEMGSEIPREAPWKAPHAEEWDKMTMKQLFDKICWTSSARRFATLFVNVNVTSEPHEVSALWFLWYVKQCGGTMRIFSTTNGGQERKFLGGSSQISECMAKELGERVKMESPVYKIDQTGDMVEVETLNKETYKAKYVIVATPPGLNLKMHFNPELPPLRNQLIHRVPMGSVIKCIVYYRENFWRKKGYCGTMVIEEEEAPIGLTLDDTKPDGTVPAIMGFILARKCRKLCGLTKEERKKRICEIYSRVLGSEEALHPVHYEEKNWCEEEYSGGCYTAYFPPGILTQYGKVLREPVGRLYFAGTETATEWSGYMEGAVQAGERAAREVMYEMGRIPQSQIWQTEPESVEVPALPFVTTFWERNLPSVGGFINFLAASVLSVATAAGMLAYQKGLLTRS.

At 1 to 492 the chain is on the cytoplasmic side; sequence MTAQNTFDVI…FWERNLPSVG (492 aa). Cys-399 bears the S-8alpha-FAD cysteine mark. Residues 493–513 traverse the membrane as a helical; Anchor for type IV membrane protein segment; sequence GFINFLAASVLSVATAAGMLA. Topologically, residues 514-522 are mitochondrial intermembrane; the sequence is YQKGLLTRS.

It belongs to the flavin monoamine oxidase family. It depends on FAD as a cofactor.

The protein localises to the mitochondrion outer membrane. The catalysed reaction is a secondary aliphatic amine + O2 + H2O = a primary amine + an aldehyde + H2O2. In terms of biological role, catalyzes the oxidative deamination of biogenic and xenobiotic amines and has important functions in the metabolism of neuroactive and vasoactive amines in the central nervous system and peripheral tissues. Oxidizes both 5-hydroxytryptamine (5-HT) and beta-phenylethylamine (PEA). This Oncorhynchus mykiss (Rainbow trout) protein is Amine oxidase [flavin-containing] (mao).